The sequence spans 249 residues: Ubiquinone biosynthesis O-methyltransferase (249 aa).

Residues 1-23 (MTSPSQVLPASAGKPTGPNADPK) are disordered. R52, G71, D92, and M136 together coordinate S-adenosyl-L-methionine.

The protein belongs to the methyltransferase superfamily. UbiG/COQ3 family.

The catalysed reaction is a 3-demethylubiquinol + S-adenosyl-L-methionine = a ubiquinol + S-adenosyl-L-homocysteine + H(+). It catalyses the reaction a 3-(all-trans-polyprenyl)benzene-1,2-diol + S-adenosyl-L-methionine = a 2-methoxy-6-(all-trans-polyprenyl)phenol + S-adenosyl-L-homocysteine + H(+). The protein operates within cofactor biosynthesis; ubiquinone biosynthesis. Its function is as follows. O-methyltransferase that catalyzes the 2 O-methylation steps in the ubiquinone biosynthetic pathway. In Cupriavidus pinatubonensis (strain JMP 134 / LMG 1197) (Cupriavidus necator (strain JMP 134)), this protein is Ubiquinone biosynthesis O-methyltransferase.